A 508-amino-acid polypeptide reads, in one-letter code: MTSLMPGAGLLPIPTPNPLTTLGVSLSSLGAIPAAALDPNIATLGEIPQPPLMGNVDPSKIDEIRRTVYVGNLNSQTTTADQLLEFFKQVGEVKFVRMAGDETQPTRFAFVEFADQNSVPRALAFNGVMFGDRPLKINHSNNAIVKPPEMTPQAAAKELEEVMKRVREAQSFISAAIEPESGKSNERKGGRSRSHTRSKSRSSSKSHSRRKRSQSKHRSRSHNRSRSRQKDRRRSKSPHKKRSKSRERRKSRSRSHSRDKRKDTREKIKEKERVKEKDREKEREREKEREKEKERGKNKDRDKEREKDREKDKEKDREREREKEHEKDRDKEKEKEQDKEKEREKDRSKEIDEKRKKDKKSRTPPRSYNASRRSRSSSRERRRRRSRSSSRSPRTSKTIKRKSSRSPSPRSRNKKDKKREKERDHISERRERERSTSMRKSSNDRDGKEKLEKNSTSLKEKEHNKEPDSSVSKEVDDKDAPRTEENKIQHNGNCQLNEENLSTKTEAV.

The region spanning 66 to 142 (RTVYVGNLNS…RPLKINHSNN (77 aa)) is the RRM domain. 2 positions are modified to phosphoserine: Ser-171 and Ser-184. A disordered region spans residues 173-508 (ISAAIEPESG…ENLSTKTEAV (336 aa)). The span at 180–189 (ESGKSNERKG) shows a compositional bias: basic and acidic residues. Over residues 190 to 259 (GRSRSHTRSK…KSRSRSHSRD (70 aa)) the composition is skewed to basic residues. Over residues 260–355 (KRKDTREKIK…DRSKEIDEKR (96 aa)) the composition is skewed to basic and acidic residues. At Thr-363 the chain carries Phosphothreonine. A compositionally biased stretch (basic residues) spans 372 to 388 (RRSRSSSRERRRRRSRS). Over residues 419–488 (REKERDHISE…DAPRTEENKI (70 aa)) the composition is skewed to basic and acidic residues. The segment covering 489–508 (QHNGNCQLNEENLSTKTEAV) has biased composition (polar residues). Lys-504 is covalently cross-linked (Glycyl lysine isopeptide (Lys-Gly) (interchain with G-Cter in SUMO2)).

Belongs to the splicing factor SR family. As to quaternary structure, homodimer. Binds SFRS1, SFRS2, SFRS3 and SFRS6. Interacts with the spliceosome. Interacts with SREK1IP1.

It is found in the nucleus. Its function is as follows. Participates in the regulation of alternative splicing by modulating the activity of other splice facors. Inhibits the splicing activity of SFRS1, SFRS2 and SFRS6. Augments the splicing activity of SFRS3. The protein is Splicing regulatory glutamine/lysine-rich protein 1 (SREK1) of Homo sapiens (Human).